The chain runs to 266 residues: Type III pantothenate kinase (266 aa).

Residue 11-18 (DIGNTSTV) coordinates ATP. Substrate is bound at residue 111–114 (GADR). Aspartate 113 serves as the catalytic Proton acceptor. Position 135 (aspartate 135) interacts with K(+). Threonine 138 is an ATP binding site. Substrate is bound at residue threonine 190.

Belongs to the type III pantothenate kinase family. In terms of assembly, homodimer. It depends on NH4(+) as a cofactor. Requires K(+) as cofactor.

The protein resides in the cytoplasm. The enzyme catalyses (R)-pantothenate + ATP = (R)-4'-phosphopantothenate + ADP + H(+). It participates in cofactor biosynthesis; coenzyme A biosynthesis; CoA from (R)-pantothenate: step 1/5. In terms of biological role, catalyzes the phosphorylation of pantothenate (Pan), the first step in CoA biosynthesis. The protein is Type III pantothenate kinase of Deinococcus geothermalis (strain DSM 11300 / CIP 105573 / AG-3a).